A 303-amino-acid chain; its full sequence is 1D-myo-inositol 2-acetamido-2-deoxy-alpha-D-glucopyranoside deacetylase 1 (303 aa).

Zn(2+) contacts are provided by H15, D18, and H157.

This sequence belongs to the MshB deacetylase family. It depends on Zn(2+) as a cofactor.

The catalysed reaction is 1D-myo-inositol 2-acetamido-2-deoxy-alpha-D-glucopyranoside + H2O = 1D-myo-inositol 2-amino-2-deoxy-alpha-D-glucopyranoside + acetate. Its function is as follows. Catalyzes the deacetylation of 1D-myo-inositol 2-acetamido-2-deoxy-alpha-D-glucopyranoside (GlcNAc-Ins) in the mycothiol biosynthesis pathway. This Saccharopolyspora erythraea (strain ATCC 11635 / DSM 40517 / JCM 4748 / NBRC 13426 / NCIMB 8594 / NRRL 2338) protein is 1D-myo-inositol 2-acetamido-2-deoxy-alpha-D-glucopyranoside deacetylase 1.